Reading from the N-terminus, the 470-residue chain is Solute carrier family 7 member 13 (470 aa).

At 1–11 (MDRGEKIQLKR) the chain is on the cytoplasmic side. The helical transmembrane segment at 12-32 (VFGYWWGTSFLLINIIGAGIF) threads the bilayer. Topologically, residues 33 to 45 (VSPKGVLAYSCMN) are extracellular. The chain crosses the membrane as a helical span at residues 46–66 (VGVSLCVWAGCAILAMTSTLC). Residues 67-87 (SAEISISFPCSGAQYYFLKRY) lie on the Cytoplasmic side of the membrane. Residues 88–108 (FGSTVAFLNLWTSLFLGSGVV) form a helical membrane-spanning segment. At 109-128 (AGQALLLAEYSIQPFFPSCS) the chain is on the extracellular side. The helical transmembrane segment at 129–149 (VPKLPKKCLALAMLWIVGILT) threads the bilayer. The Cytoplasmic portion of the chain corresponds to 150–162 (SRGVKEVTWLQIA). The helical transmembrane segment at 163 to 183 (SSVLKVSILSFISLTGVVFLI) threads the bilayer. Topologically, residues 184-206 (RGKKENVERFQNAFDAELPDISH) are extracellular. Residues 207-227 (LIQAIFQGYFAYSGGACFTLI) form a helical membrane-spanning segment. The Cytoplasmic portion of the chain corresponds to 228 to 240 (AGELKKPRTTIPK). The chain crosses the membrane as a helical span at residues 241-261 (CIFTALPLVTVVYLLVNISYL). Topologically, residues 262 to 287 (TVLTPREILSSDAVAITWADRAFPSL) are extracellular. The chain crosses the membrane as a helical span at residues 288–308 (AWIMPFAISTSLFSNLLISIF). Residues 309 to 336 (KSSRPIYLASQEGQLPLLFNTLNSHSSP) are Cytoplasmic-facing. Residues 337-357 (FTAVLLLVTLGSLAIILTSLI) traverse the membrane as a helical segment. A topological domain (extracellular) is located at residue aspartate 358. Residues 359–379 (LINYIFFTGSLWSILLMIGIL) traverse the membrane as a helical segment. Residues 380–393 (RRRYQEPNLSIPYK) are Cytoplasmic-facing. The helical transmembrane segment at 394 to 414 (VFLSFPLATIVIDVGLVVIPL) threads the bilayer. Residues 415–421 (VKSPNVH) lie on the Extracellular side of the membrane. The helical transmembrane segment at 422–442 (YVYVLLLVLSGLLFYIPLIHF) threads the bilayer. At 443–470 (KIRLAWFEKMTCYLQLLFNICLPDVSEE) the chain is on the cytoplasmic side.

It belongs to the amino acid-polyamine-organocation (APC) superfamily. As to quaternary structure, disulfide-linked heterodimer composed of the catalytic light subunit SLC7A13 and the heavy subunit SLC3A1. In terms of tissue distribution, expressed in the kidney.

The protein resides in the apical cell membrane. It catalyses the reaction L-cystine(out) + L-aspartate(in) = L-cystine(in) + L-aspartate(out). It carries out the reaction L-cystine(out) = L-cystine(in). The catalysed reaction is L-aspartate(in) + L-glutamate(out) = L-aspartate(out) + L-glutamate(in). The enzyme catalyses L-aspartate(in) + L-glutamine(out) = L-aspartate(out) + L-glutamine(in). It catalyses the reaction L-aspartate(in) + L-methionine(out) = L-aspartate(out) + L-methionine(in). It carries out the reaction L-leucine(out) + L-aspartate(in) = L-leucine(in) + L-aspartate(out). The catalysed reaction is L-valine(out) + L-aspartate(in) = L-valine(in) + L-aspartate(out). The enzyme catalyses L-aspartate(in) + L-phenylalanine(out) = L-aspartate(out) + L-phenylalanine(in). It catalyses the reaction L-tyrosine(out) + L-aspartate(in) = L-tyrosine(in) + L-aspartate(out). It carries out the reaction L-tryptophan(out) + L-aspartate(in) = L-tryptophan(in) + L-aspartate(out). Associates with SLC3A1/rBAT to form a functional heterodimeric complex that transports anionic and neutral amino acids across the apical plasma membrane of renal epithelium. Preferentially mediates exchange transport, but can also operate via facilitated diffusion. May act as a major transporter for L-cystine in late proximal tubules, ensuring its reabsorption from the luminal fluid in exchange for cytosolic L-glutamate or L-aspartate. The sequence is that of Solute carrier family 7 member 13 (SLC7A13) from Homo sapiens (Human).